A 297-amino-acid polypeptide reads, in one-letter code: Acetaldehyde dehydrogenase (297 aa).

15 to 18 is an NAD(+) binding site; the sequence is SGSI. Catalysis depends on cysteine 130, which acts as the Acyl-thioester intermediate. NAD(+) is bound by residues 162–170 and asparagine 272; that span reads SAGIATREN.

This sequence belongs to the acetaldehyde dehydrogenase family.

It catalyses the reaction acetaldehyde + NAD(+) + CoA = acetyl-CoA + NADH + H(+). This is Acetaldehyde dehydrogenase (mhpF) from Burkholderia thailandensis (strain ATCC 700388 / DSM 13276 / CCUG 48851 / CIP 106301 / E264).